Here is a 438-residue protein sequence, read N- to C-terminus: 23S rRNA (uracil(1939)-C(5))-methyltransferase RlmD (438 aa).

Residues 10–68 (RVTTRQTITVKVHDLDSFGQGVAHHNGKALFVQGALPDEVAEVSIIEDKRHFSRGVATR) enclose the TRAM domain. Residues Cys-81, Cys-87, Cys-90, and Cys-168 each coordinate [4Fe-4S] cluster. Gln-271, Phe-300, Asn-305, Glu-321, Asn-348, and Asp-369 together coordinate S-adenosyl-L-methionine. The active-site Nucleophile is the Cys-395.

The protein belongs to the class I-like SAM-binding methyltransferase superfamily. RNA M5U methyltransferase family. RlmD subfamily.

It catalyses the reaction uridine(1939) in 23S rRNA + S-adenosyl-L-methionine = 5-methyluridine(1939) in 23S rRNA + S-adenosyl-L-homocysteine + H(+). Its function is as follows. Catalyzes the formation of 5-methyl-uridine at position 1939 (m5U1939) in 23S rRNA. The sequence is that of 23S rRNA (uracil(1939)-C(5))-methyltransferase RlmD from Erwinia tasmaniensis (strain DSM 17950 / CFBP 7177 / CIP 109463 / NCPPB 4357 / Et1/99).